The following is a 253-amino-acid chain: Flagellar brake protein YcgR (253 aa).

Residues Q120–Y239 form the PilZ domain.

It belongs to the YcgR family. Monomer. Interacts with the flagellar basal bodies.

Its subcellular location is the bacterial flagellum basal body. Functionally, acts as a flagellar brake, regulating swimming and swarming in a bis-(3'-5') cyclic diguanylic acid (c-di-GMP)-dependent manner. Binds 1 c-di-GMP dimer per subunit. Increasing levels of c-di-GMP lead to decreased motility. The polypeptide is Flagellar brake protein YcgR (Methylotenera mobilis (strain JLW8 / ATCC BAA-1282 / DSM 17540)).